The chain runs to 163 residues: Small ribosomal subunit protein uS3m (163 aa).

The transit peptide at 1–31 (MAASLIRQTKLLSVFSSAGCFRSIHSTAACL) directs the protein to the mitochondrion.

The protein belongs to the universal ribosomal protein uS3 family. In terms of assembly, component of the mitochondrial ribosome small subunit (28S) which comprises a 12S rRNA and about 30 distinct proteins.

It is found in the mitochondrion. The polypeptide is Small ribosomal subunit protein uS3m (mrps24) (Danio rerio (Zebrafish)).